Consider the following 353-residue polypeptide: Soluble interferon alpha/beta receptor OPG204 (353 aa).

An N-terminal signal peptide occupies residues 1–21 (MTMKMMVHIYFVSLSLLLLLF). 2 Ig-like C2-type domains span residues 67–139 (LGEP…KNGD) and 157–239 (PKTY…IVVS). 2 cysteine pairs are disulfide-bonded: Cys75–Cys131 and Cys174–Cys223. 5 N-linked (GlcNAc...) asparagine; by host glycosylation sites follow: Asn119, Asn184, Asn263, Asn271, and Asn323. The 100-residue stretch at 248–347 (PSQDHRFKLI…HNYYFEKTLT (100 aa)) folds into the Ig-like V-type domain. Cys274 and Cys335 are oxidised to a cystine.

This sequence belongs to the interleukin-1 receptor family. As to quaternary structure, interacts with host IFNA1.

It localises to the secreted. Its function is as follows. Counteracts the antiviral effects of host IFN-alpha/beta and key IFN-inducible proteins involved in viral RNA degradation suxh as host OAS1. Acts as a soluble IFN-alpha receptor and thus inhibits the interaction between host IFN-alpha and its receptor. The protein is Soluble interferon alpha/beta receptor OPG204 (OPG204) of Homo sapiens (Human).